The chain runs to 510 residues: P-(S)-hydroxymandelonitrile lyase (510 aa).

The signal sequence occupies residues 1–34; it reads MAVFISSSGSPGRATATTTTTTTLLLAVLAAAAA. 116–118 lines the substrate pocket; the sequence is NGG. 3 disulfides stabilise this stretch: Cys-121/Cys-377, Cys-277/Cys-289, and Cys-313/Cys-344. N-linked (GlcNAc...) asparagine glycosylation occurs at Asn-172. 212–213 contributes to the substrate binding site; sequence ES. Ser-213 is an active-site residue. N-linked (GlcNAc...) asparagine glycosylation is present at Asn-365. Residues Asp-414 and His-469 contribute to the active site. A substrate-binding site is contributed by 465 to 469; the sequence is SGAGH.

The protein belongs to the peptidase S10 family. Heterotetramer of two A and two B chains. The A and B chains are linked by a disulfide bond. In terms of processing, the N-terminus of chain A is blocked. As to expression, primary leaves of seedlings.

The enzyme catalyses (S)-4-hydroxymandelonitrile = 4-hydroxybenzaldehyde + hydrogen cyanide. Functionally, involved in cyanogenesis, the release of HCN from injured tissues. Is involved in the catabolism of the cyanogenic glycoside dhurrin. This is P-(S)-hydroxymandelonitrile lyase from Sorghum bicolor (Sorghum).